The chain runs to 428 residues: Serine--tRNA ligase (428 aa).

Residue threonine 235–glutamate 237 coordinates L-serine. Arginine 266–glutamate 268 lines the ATP pocket. Glutamate 289 serves as a coordination point for L-serine. ATP is bound at residue glutamate 353–serine 356. Serine 389 provides a ligand contact to L-serine.

This sequence belongs to the class-II aminoacyl-tRNA synthetase family. Type-1 seryl-tRNA synthetase subfamily. Homodimer. The tRNA molecule binds across the dimer.

Its subcellular location is the cytoplasm. It carries out the reaction tRNA(Ser) + L-serine + ATP = L-seryl-tRNA(Ser) + AMP + diphosphate + H(+). It catalyses the reaction tRNA(Sec) + L-serine + ATP = L-seryl-tRNA(Sec) + AMP + diphosphate + H(+). Its pathway is aminoacyl-tRNA biosynthesis; selenocysteinyl-tRNA(Sec) biosynthesis; L-seryl-tRNA(Sec) from L-serine and tRNA(Sec): step 1/1. Its function is as follows. Catalyzes the attachment of serine to tRNA(Ser). Is also able to aminoacylate tRNA(Sec) with serine, to form the misacylated tRNA L-seryl-tRNA(Sec), which will be further converted into selenocysteinyl-tRNA(Sec). The polypeptide is Serine--tRNA ligase (Shewanella sediminis (strain HAW-EB3)).